Consider the following 339-residue polypeptide: Biotin synthase (339 aa).

A Radical SAM core domain is found at 51–278 (SEVELATLLS…KARVRLSAGR (228 aa)). [4Fe-4S] cluster is bound by residues cysteine 66, cysteine 70, and cysteine 73. [2Fe-2S] cluster-binding residues include cysteine 110, cysteine 141, cysteine 201, and arginine 273.

The protein belongs to the radical SAM superfamily. Biotin synthase family. As to quaternary structure, homodimer. It depends on [4Fe-4S] cluster as a cofactor. Requires [2Fe-2S] cluster as cofactor.

The catalysed reaction is (4R,5S)-dethiobiotin + (sulfur carrier)-SH + 2 reduced [2Fe-2S]-[ferredoxin] + 2 S-adenosyl-L-methionine = (sulfur carrier)-H + biotin + 2 5'-deoxyadenosine + 2 L-methionine + 2 oxidized [2Fe-2S]-[ferredoxin]. It participates in cofactor biosynthesis; biotin biosynthesis; biotin from 7,8-diaminononanoate: step 2/2. Its function is as follows. Catalyzes the conversion of dethiobiotin (DTB) to biotin by the insertion of a sulfur atom into dethiobiotin via a radical-based mechanism. The chain is Biotin synthase from Herminiimonas arsenicoxydans.